A 146-amino-acid chain; its full sequence is Basic phospholipase A2 73 (146 aa).

The N-terminal stretch at 1–19 (MYPAHLLVLLAVCVSLLGA) is a signal peptide. Positions 20 to 27 (ASIPPLPL) are excised as a propeptide. Cystine bridges form between C38–C98, C54–C145, C56–C72, C71–C126, C78–C119, C87–C112, and C105–C117. Ca(2+) contacts are provided by Y55, G57, and G59. H75 is an active-site residue. Residue D76 participates in Ca(2+) binding. Residue D120 is part of the active site.

The protein belongs to the phospholipase A2 family. Group I subfamily. D49 sub-subfamily. Requires Ca(2+) as cofactor. As to expression, expressed by the venom gland.

It is found in the secreted. The enzyme catalyses a 1,2-diacyl-sn-glycero-3-phosphocholine + H2O = a 1-acyl-sn-glycero-3-phosphocholine + a fatty acid + H(+). In terms of biological role, snake venom phospholipase A2 (PLA2) that inhibits neuromuscular transmission by blocking acetylcholine release from the nerve termini. PLA2 catalyzes the calcium-dependent hydrolysis of the 2-acyl groups in 3-sn-phosphoglycerides. In Hydrophis hardwickii (Hardwick's spine-bellied seasnake), this protein is Basic phospholipase A2 73.